The chain runs to 422 residues: Serine--tRNA ligase (422 aa).

Threonine 229 to glutamate 231 is a binding site for L-serine. Position 260–262 (arginine 260–glutamate 262) interacts with ATP. Glutamate 283 contacts L-serine. Glutamate 347–serine 350 serves as a coordination point for ATP. Position 383 (serine 383) interacts with L-serine.

Belongs to the class-II aminoacyl-tRNA synthetase family. Type-1 seryl-tRNA synthetase subfamily. Homodimer. The tRNA molecule binds across the dimer.

It localises to the cytoplasm. The enzyme catalyses tRNA(Ser) + L-serine + ATP = L-seryl-tRNA(Ser) + AMP + diphosphate + H(+). The catalysed reaction is tRNA(Sec) + L-serine + ATP = L-seryl-tRNA(Sec) + AMP + diphosphate + H(+). The protein operates within aminoacyl-tRNA biosynthesis; selenocysteinyl-tRNA(Sec) biosynthesis; L-seryl-tRNA(Sec) from L-serine and tRNA(Sec): step 1/1. Its function is as follows. Catalyzes the attachment of serine to tRNA(Ser). Is also able to aminoacylate tRNA(Sec) with serine, to form the misacylated tRNA L-seryl-tRNA(Sec), which will be further converted into selenocysteinyl-tRNA(Sec). This is Serine--tRNA ligase from Heliobacterium modesticaldum (strain ATCC 51547 / Ice1).